Consider the following 896-residue polypeptide: Translation initiation factor IF-2 (896 aa).

Over residues 93 to 219 (VKRDPQEAER…RMAEENEKNW (127 aa)) the composition is skewed to basic and acidic residues. The tract at residues 93–307 (VKRDPQEAER…GSALQQGFQK (215 aa)) is disordered. A compositionally biased stretch (basic residues) spans 256-271 (GRSRSSKAARPAKKGN). Over residues 272–285 (KHAESKADREEARA) the composition is skewed to basic and acidic residues. One can recognise a tr-type G domain in the interval 395 to 564 (PRAPVVTIMG…LLQAEVLELK (170 aa)). Positions 404–411 (GHVDHGKT) are G1. 404–411 (GHVDHGKT) contributes to the GTP binding site. The tract at residues 429 to 433 (GITQH) is G2. A G3 region spans residues 450-453 (DTPG). GTP-binding positions include 450-454 (DTPGH) and 504-507 (NKID). The segment at 504 to 507 (NKID) is G4. The tract at residues 540-542 (SAK) is G5.

It belongs to the TRAFAC class translation factor GTPase superfamily. Classic translation factor GTPase family. IF-2 subfamily.

Its subcellular location is the cytoplasm. Its function is as follows. One of the essential components for the initiation of protein synthesis. Protects formylmethionyl-tRNA from spontaneous hydrolysis and promotes its binding to the 30S ribosomal subunits. Also involved in the hydrolysis of GTP during the formation of the 70S ribosomal complex. The sequence is that of Translation initiation factor IF-2 from Klebsiella pneumoniae (strain 342).